The primary structure comprises 559 residues: Terpene synthase 1 (559 aa).

Mg(2+)-binding residues include Asp312, Asp316, Asp456, and Glu464. The DDXXD motif signature appears at 312–316 (DDLYD).

Belongs to the terpene synthase family. Tpsa subfamily. Mg(2+) serves as cofactor. Mn(2+) is required as a cofactor. Mostly expressed in stems and, to a lower extent, in leaves, roots and fruits.

It carries out the reaction (2E,6E)-farnesyl diphosphate = (-)-(E)-beta-caryophyllene + diphosphate. It catalyses the reaction (2E,6E)-farnesyl diphosphate = alpha-humulene + diphosphate. It functions in the pathway secondary metabolite biosynthesis; terpenoid biosynthesis. Its function is as follows. Sesquiterpene synthase involved in the biosynthesis of volatile compounds that contribute to the characteristic flavors of black pepper. Mediates the conversion of (2E,6E)-farnesyl diphosphate (FPP) into beta-caryophyllene and, as a minor compound, into alpha-humulene. The chain is Terpene synthase 1 from Piper nigrum (Black pepper).